The primary structure comprises 327 residues: GMP reductase (327 aa).

C176 acts as the Thioimidate intermediate in catalysis. Residue 205 to 228 (IIADGGIRTHGDIAKSIRFGASMV) coordinates NADP(+).

Belongs to the IMPDH/GMPR family. GuaC type 2 subfamily.

It carries out the reaction IMP + NH4(+) + NADP(+) = GMP + NADPH + 2 H(+). Catalyzes the irreversible NADPH-dependent deamination of GMP to IMP. It functions in the conversion of nucleobase, nucleoside and nucleotide derivatives of G to A nucleotides, and in maintaining the intracellular balance of A and G nucleotides. The chain is GMP reductase from Streptococcus suis (strain 98HAH33).